Consider the following 359-residue polypeptide: Membrane-bound lytic murein transglycosylase C (359 aa).

The signal sequence occupies residues 1-16 (MKKYLALALIAPLLIS). Residue cysteine 17 is the site of N-palmitoyl cysteine attachment. Cysteine 17 is lipidated: S-diacylglycerol cysteine.

This sequence belongs to the transglycosylase Slt family.

It localises to the cell outer membrane. It carries out the reaction Exolytic cleavage of the (1-&gt;4)-beta-glycosidic linkage between N-acetylmuramic acid (MurNAc) and N-acetylglucosamine (GlcNAc) residues in peptidoglycan, from either the reducing or the non-reducing ends of the peptidoglycan chains, with concomitant formation of a 1,6-anhydrobond in the MurNAc residue.. Its function is as follows. Murein-degrading enzyme. May play a role in recycling of muropeptides during cell elongation and/or cell division. The chain is Membrane-bound lytic murein transglycosylase C from Escherichia coli O8 (strain IAI1).